The primary structure comprises 1116 residues: Rho GTPase-activating protein 45 (1116 aa).

The tract at residues 1 to 72 (MFSRKKRELM…RPTSLSRHAS (72 aa)) is disordered. Residues 22 to 31 (GSPNPQSSSG) show a composition bias toward polar residues. 4 positions are modified to phosphoserine: Ser23, Ser72, Ser92, and Ser98. The F-BAR domain occupies 268–538 (EEVDMLLQRC…SSKLYDPGQQ (271 aa)). Residues 375–498 (EHERRRKEIK…QIQEVIRQSD (124 aa)) are a coiled coil. Positions 422 to 457 (VAKAEEEQQGTGPGAGTAASKALDKRRRLEEEAKNK) are disordered. Basic and acidic residues predominate over residues 448–457 (RRLEEEAKNK). Residues Ser568, Ser577, Ser591, and Ser618 each carry the phosphoserine modification. Residues 569–658 (PIMRTRKGSF…MSSSEELGDQ (90 aa)) are disordered. Residues 621–635 (ISISDTEVGLDTSSG) are compositionally biased toward polar residues. Positions 643–652 (TSSSGTMSSS) are enriched in low complexity. The Phorbol-ester/DAG-type zinc-finger motif lies at 699-744 (THRLRKLRTPAKCRECNSYVYFQGAECEECCLACHKKCLETLAIQC). A Rho-GAP domain is found at 758-971 (QDFSQAALST…TLIVHYGLVF (214 aa)). Phosphoserine occurs at positions 946, 1017, 1020, and 1022. 2 disordered regions span residues 1004-1035 (EEAE…SSSD) and 1050-1116 (AGLE…PQFV). Polar residues-rich tracts occupy residues 1080–1090 (FNTNQSNNTSR) and 1105–1116 (GGTSQERQPQFV).

Its subcellular location is the cytoplasm. The protein localises to the cell projection. It localises to the ruffle membrane. Contains a GTPase activator for the Rho-type GTPases (RhoGAP) domain that would be able to negatively regulate the actin cytoskeleton as well as cell spreading. However, also contains N-terminally a BAR-domin which is able to play an autoinhibitory effect on this RhoGAP activity. The sequence is that of Rho GTPase-activating protein 45 from Mus musculus (Mouse).